The following is a 228-amino-acid chain: UPF0758 protein RALTA_A2508 (228 aa).

In terms of domain architecture, MPN spans G102–R224. Positions 173, 175, and 186 each coordinate Zn(2+). A JAMM motif motif is present at residues H173 to D186.

The protein belongs to the UPF0758 family.

The protein is UPF0758 protein RALTA_A2508 of Cupriavidus taiwanensis (strain DSM 17343 / BCRC 17206 / CCUG 44338 / CIP 107171 / LMG 19424 / R1) (Ralstonia taiwanensis (strain LMG 19424)).